The sequence spans 100 residues: MTMKYFCSVMIAIALVGCTATPPPTQKAQQSKVSPTRTLDMEALCKAQAAQRYNTGAQKIAVTGFEQFQGSYEMRGNTFRKESFVCSFDADGQFLHLSMR.

The signal sequence occupies residues 1-17 (MTMKYFCSVMIAIALVG). Residue Cys18 is the site of N-palmitoyl cysteine attachment. Cys18 carries the S-diacylglycerol cysteine lipid modification.

It localises to the cell membrane. This is an uncharacterized protein from Salmonella paratyphi A (strain ATCC 9150 / SARB42).